The chain runs to 537 residues: Actin-histidine N-methyltransferase (537 aa).

The span at 1-12 (MGKNTKRNKKTK) shows a compositional bias: basic residues. The tract at residues 1-50 (MGKNTKRNKKTKQQQQQPQQNGVTASASGTAVEDFEDQQAASSLPSLNGK) is disordered. S-adenosyl-L-methionine contacts are provided by residues arginine 114, 143–145 (YQL), arginine 299, 325–329 (DMANH), and 375–377 (NGF). The 232-residue stretch at 133 to 364 (EGLEIAIFPG…TGEQFFIYYG (232 aa)) folds into the SET domain.

The protein belongs to the class V-like SAM-binding methyltransferase superfamily. SETD3 actin-histidine methyltransferase family.

It is found in the cytoplasm. Its subcellular location is the nucleus. The enzyme catalyses L-histidyl-[protein] + S-adenosyl-L-methionine = N(tele)-methyl-L-histidyl-[protein] + S-adenosyl-L-homocysteine + H(+). Protein-histidine N-methyltransferase that specifically mediates 3-methylhistidine (tele-methylhistidine) methylation of actin at 'His-74'. The polypeptide is Actin-histidine N-methyltransferase (Drosophila melanogaster (Fruit fly)).